Here is a 442-residue protein sequence, read N- to C-terminus: MVSLVPCGFAQVLCTNPLDIGELRNYKSKQCVDIVGNQGSGNIATHDCDGLSDQQIIMCGDGTIRNEARNYCFTPDGSGNANVMSSPCTLYPEIPSSQRWRLGRKKAFTDNGGIEQVATEIINLASGKCLDVEGSDGTGDIGVYDCQNLDDQYFYIRSRGPELFYGRLRNEKSDLCLDVEGSEGKGNVLMYSCEDNLDQWFRYYENGEIVNAKQGMCLDVEGSDGSGNVGIYRCDDLRDQMWSRPNAYCNGDYCSFLNKESNKCLDVSGDQGTGDVGTWQCDGLPDQRFKWVFDDWEVPTATWNMVGCDQNGKVSQQISNTISFSSTVTAGVAVEVSSTIEKGVIFAKASVSVKVTASLSKAWTNSQSGTTAITYTCDNYDSDEEFTRGCMWQLAIETTEVKSGDLLVWNPQIIKCTRSNTAPGCAPFTKCANEDCTFCTDI.

Residues 1–10 (MVSLVPCGFA) constitute a propeptide, removed in mature form. Position 11 is a pyrrolidone carboxylic acid (glutamine 11). The interval 11–304 (QVLCTNPLDI…DWEVPTATWN (294 aa)) is has hemagglutinating activity towards rabbit erythrocytes, but no hemolytic activity towards them. Disulfide bonds link cysteine 14–cysteine 59, cysteine 31–cysteine 48, and cysteine 72–cysteine 88. D-galactose contacts are provided by residues aspartate 19 and 33-36 (DIVG). 2 consecutive Ricin B-type lectin domains span residues 28-102 (SKQC…RWRL) and 115-245 (EQVA…WSRP). Residues aspartate 33, isoleucine 34, and glycine 36 each coordinate Ca(2+). Residues asparagine 42 and isoleucine 43 each contribute to the Mg(2+) site. Residue aspartate 49 coordinates D-galactose. Aspartate 53 contacts Ca(2+). Asparagine 82 and valine 83 together coordinate Mg(2+). D-galactose-binding positions include valine 117 and 131–134 (DVEG). Residues cysteine 129 and cysteine 146 are joined by a disulfide bond. Ca(2+) is bound by residues aspartate 131, valine 132, and glycine 134. Position 141 (isoleucine 141) interacts with Mg(2+). 144 to 147 (YDCQ) is a D-galactose binding site. Residues aspartate 151, aspartate 178, valine 179, and glycine 181 each coordinate Ca(2+). Cysteine 176 and cysteine 193 are disulfide-bonded. D-galactose is bound at residue 178 to 181 (DVEG). The Mg(2+) site is built by asparagine 187 and valine 188. 191–194 (YSCE) contacts D-galactose. Ca(2+)-binding residues include aspartate 198, aspartate 219, valine 220, and glycine 222. Cysteine 217 and cysteine 234 are joined by a disulfide. 219-222 (DVEG) provides a ligand contact to D-galactose. Asparagine 228 and valine 229 together coordinate Mg(2+). 232 to 235 (YRCD) lines the D-galactose pocket. Ca(2+) is bound at residue aspartate 239. Cystine bridges form between cysteine 249-cysteine 254 and cysteine 264-cysteine 281. The region spanning 261-293 (SNKCLDVSGDQGTGDVGTWQCDGLPDQRFKWVF) is the Ricin B-type lectin 3 domain. Ca(2+) is bound by residues aspartate 266, valine 267, and glycine 269. D-galactose is bound at residue 266–269 (DVSG). Mg(2+) is bound by residues aspartate 275 and valine 276. D-galactose is bound by residues 279–282 (WQCD) and aspartate 286. Aspartate 286 lines the Ca(2+) pocket. Residues 294–442 (DDWEVPTATW…NEDCTFCTDI (149 aa)) are has a strong tendency to self-associate leading to formation of oligomers. 4 cysteine pairs are disulfide-bonded: cysteine 308/cysteine 390, cysteine 377/cysteine 416, cysteine 425/cysteine 439, and cysteine 431/cysteine 436.

In terms of assembly, oligomerizes in the human and rabbit erythrocyte membranes. Oligomerization is induced by binding of beta-1,4-linked disaccharide ligands such as lactose, lactulose, N-acetyllactosamine and phenyl-beta-D-galactoside, but only a little by N-acetylgalactosamine and galactose, and not at all by melibiose in aqueous solution in the presence of high salt concentration and pH 10. Forms heptamers that assemble into larger 21mer oligomers, which may be inserted as a transmembrane pore to the erythrocyte membrane. It depends on Ca(2+) as a cofactor. The cofactor is Mg(2+). In terms of tissue distribution, expressed in body fluid (at protein level).

It is found in the secreted. With respect to regulation, ca(2+) is required for hemolytic activity and the activity increases with increasing calcium concentration. Hemolytic activity is inhibited by N-acetylgalactosamine (GalNAc), lactose, lactulose, galactosamine, dextran with molecular masses greater than 4 kDa, to a lesser extent by inulin and only slightly by sucrose and melezitose, but not by glucose or mannose. The activity is abolished in the presence of 10 mM EDTA. Lactose-binding increases with increasing calcium concentration, but calcium has no effect on hemagglutinating activity. Cytotoxic effect on Madin-Darby canine kidney (MDCK) cell line is strongly inhibited by galactose, lactose and N-acetylgalactosamine (GalNAc), but not by raffinose, N-acetylglucosamine (GlcNAc), glucose, mannose, ribose or sucrose. Pore formation in artificial lactosyl ceramide (LacCer) or globotetraosylceramide (Gb4Cer) containing liposomes is strongly inhibited by lactose. In terms of biological role, galactose/N-acetylgalactosamine (Gal/GalNAc)-binding lectin with hemolytic activity. Favors saccharides that have a beta-1,4 linkage at the non-reducing end rather than saccharides having alpha-1,6 or alpha-1,4 linkages. Binds lactose, lactulose, GalNAc, galactosamine, methyl alpha-galactopyranoside, methyl beta-galactopyranoside, N-acetyllactosamine, p-nitrophenyl beta-D-galactopyranoside (pNP-Gal), p-nitrophenyl N-acetyl-beta-D-galactosaminide (pNP-GalNAc), asialofetuin, and human erythrocyte membrane lipids lactosyl ceramide (LacCer) and globoside globotetraosylceramide (Gb4Cer). Binds moderately to galactose, melibiose, raffinose, fucose, methyl alpha-galactoside and methyl beta-galactoside. Binds weakly to glucose, mannose and N-acetylglucosamine (GlcNAc). Has hemolytic activity towards human (A, B and O-type), rabbit and rat erythrocytes, but not towards mouse, chicken or horse erythrocytes. Forms ion-permeable transmembrane pores in the erythrocyte membrane as well as in artificial liposomes containing human erythrocyte membrane lipids LacCer, Gb4Cer and galactosyl ceramide (GalCer) leading to destruction of the membrane. Has hemagglutinating activity towards rabbit, human and rat erythrocytes, and at relatively high concentrations towards chicken and horse erythrocytes, but not towards mouse erythrocytes. Has dose-dependent cytotoxic effect on Madin-Darby canine kidney (MDCK), African green monkey kidney (Vero) and human epithelia carcinoma (HeLa) cell lines, but Chinese hamster ovary (CHO), rat sarcoma (XC) and potoroo rat kangaroo kidney (PtK1) cells are highly resistant to the cytotoxic effect of this protein. Impairs malaria parasite development in malaria parasite infected transgenic A.stephensi mosquitoes expressing this protein specifically in their midguts. Binds to ookinetes and leads to strong dose-dependent inhibition of ookinete formation in vitro. Leads to severely impaired oocyst formation and significantly reduced sporozoite production of rodent malaria parasite P.berghei in the salivary glands of the transgenic mosquitoes. The parasite transmission to uninfected mice (vectorial competence) of these mosquitoes is significantly impaired. Also leads to severely impaired oocyst formation of human malaria parasite P.falciparum in transgenic mosquitoes fed on mature P.falciparum gametocyte cultures. May be involved in defense mechanisms acting as a toxic protein to foreign microorganisms. May act in defense against predators. In Pseudocnus echinatus (Sea cucumber), this protein is Galactose/N-acetylgalactosamine-binding lectin CEL-III.